We begin with the raw amino-acid sequence, 2276 residues long: Non-reducing polyketide synthase VdtA (2276 aa).

Residues 8-243 (YLFGDQTYDY…KDIPIHAPYH (236 aa)) form an N-terminal acylcarrier protein transacylase (SAT) domain region. Residues 372 to 804 (RAKIAIVGMS…GGNSSVLVED (433 aa)) enclose the Ketosynthase family 3 (KS3) domain. Residues Cys544, His679, and His723 each act as for beta-ketoacyl synthase activity in the active site. The interval 905–1206 (FTFTGQGAQY…KALPTLQRNR (302 aa)) is malonyl-CoA:ACP transacylase (MAT) domain. The For acyl/malonyl transferase activity role is filled by Ser996. The tract at residues 1300-1616 (TTTLHRIVDE…PRRVLRYILQ (317 aa)) is product template (PT) domain. An N-terminal hotdog fold region spans residues 1304–1438 (HRIVDEKSTE…CRIKFSDRST (135 aa)). The PKS/mFAS DH domain occupies 1304–1612 (HRIVDEKSTE…IQGVPRRVLR (309 aa)). Residue His1336 is the Proton acceptor; for dehydratase activity of the active site. Residues 1465 to 1612 (TYRFNGPMAY…IQGVPRRVLR (148 aa)) form a C-terminal hotdog fold region. Asp1525 (proton donor; for dehydratase activity) is an active-site residue. A Carrier 1 domain is found at 1655–1729 (SGTLTEALRI…DLKRFFDKIN (75 aa)). O-(pantetheine 4'-phosphoryl)serine is present on Ser1689. Residues 1735–1762 (APAPVSDAPKQLQPSSSPVASATPSAPI) form a disordered region. The segment covering 1748-1761 (PSSSPVASATPSAP) has biased composition (low complexity). Residues 1765–1839 (RSKFESVLNI…DLKAHFMSKN (75 aa)) form the Carrier 2 domain. Position 1799 is an O-(pantetheine 4'-phosphoryl)serine (Ser1799). Positions 1840–1854 (SDNGSSAVLTPQPSR) are enriched in polar residues. The tract at residues 1840 to 1882 (SDNGSSAVLTPQPSRDSALPERTRPRVADTSDEEDAPVSANEF) is disordered. Residues 1857 to 1868 (ALPERTRPRVAD) are compositionally biased toward basic and acidic residues. The 79-residue stretch at 1886 to 1964 (ARSTSKYMAV…GLRSFFGFES (79 aa)) folds into the Carrier 3 domain. The residue at position 1923 (Ser1923) is an O-(pantetheine 4'-phosphoryl)serine. The disordered stretch occupies residues 1967-1993 (TATNPTASQSSSSISSGTSVFDTSPSP). Low complexity predominate over residues 1969–1990 (TNPTASQSSSSISSGTSVFDTS). The thioesterase (TE) domain stretch occupies residues 2020–2271 (PLPPATSVTL…GADHFSLLVS (252 aa)).

The protein resides in the cytoplasmic vesicle. It catalyses the reaction 7 malonyl-CoA + acetyl-CoA + 7 H(+) = 7,9,10-trihydroxy-3-(2-oxopropyl)-1H-benzo[g]isochromen-1-one + 7 CO2 + 8 CoA + 2 H2O. Its pathway is secondary metabolite biosynthesis. Functionally, non-reducing polyketide synthase; part of the gene cluster that mediates the biosynthesis of viriditoxin, one of the 'classical' secondary metabolites produced by fungi and that has antibacterial activity. The first step is performed by the polyketide synthase VdtA which condenses one acetyl-CoA and 6 malonyl-CoA units to form the heptaketide monomer backbone of viriditoxin. The product of VdtA is then O-methylated on C7 by the O-methyltransferase VdtC. The O-methyl group is important for the stereoselective coupling of the monomers at the final step of viriditoxin biosynthesis. The short-chain dehydrogenase/reductase VdtF then acts as a stereospecific reductase converting the pyrone to dihydropyrone via the reduction of the C3-C4 double bond. The FAD-binding monooxygenase VdtE then converts the ketone group into a methyl-ester group to yield semi-viriditoxin. Finally, the laccase VdtB is involved in dimerization of 2 semi-viriditoxin molecules to yield the final viriditoxin. VdtB is responsible for the regioselective 6,6'-coupling of semi-viriditoxin, which yields (M)-viriditoxin and (P)-viriditoxin at a ratio of 1:2. The non-catalytic carboxylesterase-like protein VdtD affects the stereochemistical outcome of the coupling. The highly reducing polyketide synthase VdtX is not involved in viriditoxin synthesis, but might possibly play a role in the production of additional metabolites not identified yet. This is Non-reducing polyketide synthase VdtA from Byssochlamys spectabilis (Paecilomyces variotii).